Here is a 1499-residue protein sequence, read N- to C-terminus: MEREPAGTEEPGPPGRRRRREGRTRTVRSNLLPPPGAEDPAAGAAKGERRRRRGCAQHLADNRLKTTKYTLLSFLPKNLFEQFHRPANVYFVFIALLNFVPAVNAFQPGLALAPVLFILAITAFRDLWEDYSRHRSDHKINHLGCLVFSREEKKYVNRFWKEIHVGDFVRLRCNEIFPADILLLSSSDPDGLCHIETANLDGETNLKRRQVVRGFSELVSEFNPLTFTSVIECEKPNNDLSRFRGCIIHDNGKKAGLYKENLLLRGCTLRNTDAVVGIVIYAGHETKALLNNSGPRYKRSKLERQMNCDVLWCVLLLVCMSLFSAVGHGLWIWRYQEKKSLFYVPKSDGSSLSPVTAAVYSFLTMIIVLQVLIPISLYVSIEIVKACQVYFINQDMQLYDEETDSQLQCRALNITEDLGQIQYIFSDKTGTLTENKMVFRRCTVSGVEYSHDANAQRLARYQEADSEEEEVVPRGGSVSQRGSIGSHQSVRVVHRTQSTKSHRRTGSRAEAKRASMLSKHTAFSSPMEKDITPDPKLLEKVSECDKSLAVARHQEHLLAHLSPELSDVFDFFIALTICNTVVVTSPDQPRTKVRVRFELKSPVKTIEDFLRRFTPSCLTSGCSSIGSLAANKSSHKLGSSFPSTPSSDGMLLRLEERLGQPTSAIASNGYSSQADNWASELAQEQESERELRYEAESPDEAALVYAARAYNCVLVERLHDQVSVELPHLGRLTFELLHTLGFDSVRKRMSVVIRHPLTDEINVYTKGADSVVMDLLQPCSSVDARGRHQKKIRSKTQNYLNVYAAEGLRTLCIAKRVLSKEEYACWLQSHLEAESSLENSEELLFQSAIRLETNLHLLGATGIEDRLQDGVPETISKLRQAGLQIWVLTGDKQETAVNIAYACKLLDHDEEVITLNATSQEACAALLDQCLCYVQSRGLQRAPEKTKGKVSMRFSSLCPPSTSTASGRRPSLVIDGRSLAYALEKNLEDKFLFLAKQCRSVLCCRSTPLQKSMVVKLVRSKLKAMTLAIGDGANDVSMIQVADVGVGISGQEGMQAVMASDFAVPKFRYLERLLILHGHWCYSRLANMVLYFFYKNTMFVGLLFWFQFFCGFSASTMIDQWYLIFFNLLFSSLPPLVTGVLDRDVPANVLLTNPQLYKSGQNMEEYRPRTFWFNMADAAFQSLVCFSIPYLAYYDSNVDLFTWGTPIVTIALLTFLLHLGIETKTWTWLNWITCGFSVLLFFTVALIYNASCATCYPPSNPYWTMQALLGDPVFYLTCLMTPVAALLPRLFFRSLQGRVFPTQLQLARQLTRKSPRRCSAPKETFAQGRLPKDSGTEHSSGRTVKTSVPLSQPSWHTQQPVCSLEASGEPSTVDMSMPVREHTLLEGLSAPAPMSSAPGEAVLRSPGGCPEESKVRAASTGRVTPLSSLFSLPTFSLLNWISSWSLVSRLGSVLQFSRTEQLADGQAGRGLPVQPHSGRSGLQGPDHRLLIGASSRRSQ.

The interval 1–53 is disordered; that stretch reads MEREPAGTEEPGPPGRRRRREGRTRTVRSNLLPPPGAEDPAAGAAKGERRRRR. The Cytoplasmic portion of the chain corresponds to 1 to 86; sequence MEREPAGTEE…KNLFEQFHRP (86 aa). Basic residues predominate over residues 15-26; it reads GRRRRREGRTRT. A helical transmembrane segment spans residues 87–106; it reads ANVYFVFIALLNFVPAVNAF. Over 107 to 110 the chain is Exoplasmic loop; it reads QPGL. Residues 111–128 traverse the membrane as a helical segment; that stretch reads ALAPVLFILAITAFRDLW. At 129-309 the chain is on the cytoplasmic side; sequence EDYSRHRSDH…SKLERQMNCD (181 aa). Residues 310–332 form a helical membrane-spanning segment; that stretch reads VLWCVLLLVCMSLFSAVGHGLWI. Residues 333–362 are Exoplasmic loop-facing; that stretch reads WRYQEKKSLFYVPKSDGSSLSPVTAAVYSF. The helical transmembrane segment at 363 to 384 threads the bilayer; that stretch reads LTMIIVLQVLIPISLYVSIEIV. Residues 385-1087 are Cytoplasmic-facing; that stretch reads KACQVYFINQ…GHWCYSRLAN (703 aa). Aspartate 427 functions as the 4-aspartylphosphate intermediate in the catalytic mechanism. Residues aspartate 427, lysine 428, and threonine 429 each coordinate ATP. Aspartate 427 lines the Mg(2+) pocket. Threonine 429 contributes to the Mg(2+) binding site. Residues 464–531 form a disordered region; it reads ADSEEEEVVP…AFSSPMEKDI (68 aa). A Phosphoserine modification is found at serine 466. The segment covering 477-499 has biased composition (polar residues); it reads SVSQRGSIGSHQSVRVVHRTQST. ATP is bound by residues glutamate 700, phenylalanine 742, lysine 766, arginine 809, threonine 889, glycine 890, aspartate 891, arginine 1005, and lysine 1011. Residue aspartate 1031 coordinates Mg(2+). ATP-binding residues include asparagine 1034 and aspartate 1035. Aspartate 1035 serves as a coordination point for Mg(2+). The chain crosses the membrane as a helical span at residues 1088-1108; sequence MVLYFFYKNTMFVGLLFWFQF. The Exoplasmic loop portion of the chain corresponds to 1109-1119; sequence FCGFSASTMID. The helical transmembrane segment at 1120 to 1140 threads the bilayer; it reads QWYLIFFNLLFSSLPPLVTGV. At 1141-1170 the chain is on the cytoplasmic side; that stretch reads LDRDVPANVLLTNPQLYKSGQNMEEYRPRT. The chain crosses the membrane as a helical span at residues 1171–1192; that stretch reads FWFNMADAAFQSLVCFSIPYLA. Residues 1193-1199 lie on the Exoplasmic loop side of the membrane; the sequence is YYDSNVD. A helical membrane pass occupies residues 1200–1222; the sequence is LFTWGTPIVTIALLTFLLHLGIE. The Cytoplasmic segment spans residues 1223 to 1228; the sequence is TKTWTW. Residues 1229-1249 form a helical membrane-spanning segment; sequence LNWITCGFSVLLFFTVALIYN. The Exoplasmic loop portion of the chain corresponds to 1250–1267; that stretch reads ASCATCYPPSNPYWTMQA. A helical membrane pass occupies residues 1268–1292; it reads LLGDPVFYLTCLMTPVAALLPRLFF. Residues 1293-1499 are Cytoplasmic-facing; that stretch reads RSLQGRVFPT…LIGASSRRSQ (207 aa). 2 disordered regions span residues 1311–1356 and 1464–1499; these read TRKS…PSWH and DGQAGRGLPVQPHSGRSGLQGPDHRLLIGASSRRSQ. Residues 1330 to 1340 are compositionally biased toward basic and acidic residues; it reads LPKDSGTEHSS. The span at 1341-1356 shows a compositional bias: polar residues; sequence GRTVKTSVPLSQPSWH.

Belongs to the cation transport ATPase (P-type) (TC 3.A.3) family. Type IV subfamily. Component of a P4-ATPase flippase complex which consists of a catalytic alpha subunit ATP10A and an accessory beta subunit TMEM30A. Requires Mg(2+) as cofactor. Post-translationally, autophosphorylated at the conserved aspartate of the P-type ATPase signature sequence. In terms of tissue distribution, widely expressed, with highest levels in kidney, followed by lung, brain, prostate, testis, ovary and small intestine.

Its subcellular location is the cell membrane. It localises to the endoplasmic reticulum membrane. It carries out the reaction ATP + H2O + phospholipidSide 1 = ADP + phosphate + phospholipidSide 2.. It catalyses the reaction a 1,2-diacyl-sn-glycero-3-phosphocholine(out) + ATP + H2O = a 1,2-diacyl-sn-glycero-3-phosphocholine(in) + ADP + phosphate + H(+). The enzyme catalyses a beta-D-glucosyl-(1&lt;-&gt;1')-N-acylsphing-4-enine(out) + ATP + H2O = a beta-D-glucosyl-(1&lt;-&gt;1')-N-acylsphing-4-enine(in) + ADP + phosphate + H(+). With respect to regulation, inhibited under hypotonic conditions. Catalytic component of P4-ATPase flippase complex, which catalyzes the hydrolysis of ATP coupled to the transport of phosphatidylcholine (PC) from the outer to the inner leaflet of the plasma membrane. Initiates inward plasma membrane bending and recruitment of Bin/amphiphysin/Rvs (BAR) domain-containing proteins involved in membrane tubulation and cell trafficking. Facilitates ITGB1/beta1 integrin endocytosis, delaying cell adhesion and cell spreading on extracellular matrix. Has low flippase activity toward glucosylceramide (GlcCer). This chain is Phospholipid-transporting ATPase VA, found in Homo sapiens (Human).